Here is a 434-residue protein sequence, read N- to C-terminus: ATP-dependent protease ATPase subunit HslU (434 aa).

Residues Ile-18, Gly-60–Glu-65, Asp-247, Glu-312, and Arg-384 each bind ATP.

The protein belongs to the ClpX chaperone family. HslU subfamily. As to quaternary structure, a double ring-shaped homohexamer of HslV is capped on each side by a ring-shaped HslU homohexamer. The assembly of the HslU/HslV complex is dependent on binding of ATP.

It localises to the cytoplasm. Functionally, ATPase subunit of a proteasome-like degradation complex; this subunit has chaperone activity. The binding of ATP and its subsequent hydrolysis by HslU are essential for unfolding of protein substrates subsequently hydrolyzed by HslV. HslU recognizes the N-terminal part of its protein substrates and unfolds these before they are guided to HslV for hydrolysis. This Brucella anthropi (strain ATCC 49188 / DSM 6882 / CCUG 24695 / JCM 21032 / LMG 3331 / NBRC 15819 / NCTC 12168 / Alc 37) (Ochrobactrum anthropi) protein is ATP-dependent protease ATPase subunit HslU.